We begin with the raw amino-acid sequence, 333 residues long: Electron transfer flavoprotein subunit alpha, mitochondrial (333 aa).

A mitochondrion-targeting transit peptide spans 1–19 (MFRAAAPGQLRRAASLLRF). Residues 20–204 (QSTLVIAEHA…EISEWLDQKL (185 aa)) form a domain I region. At K59 the chain carries N6-acetyllysine; alternate. Position 59 is an N6-succinyllysine; alternate (K59). K62 is modified (N6-acetyllysine). N6-acetyllysine; alternate is present on K69. K69 is subject to N6-succinyllysine; alternate. N6-acetyllysine is present on K75. At T93 the chain carries Phosphothreonine. K101 and K139 each carry N6-acetyllysine. S140 bears the Phosphoserine mark. N6-acetyllysine; alternate is present on K158. K158 carries the N6-succinyllysine; alternate modification. An N6-acetyllysine modification is found at K164. K187 carries the N6-succinyllysine modification. K203 carries the post-translational modification N6-acetyllysine; alternate. N6-succinyllysine; alternate is present on K203. Residues 205–333 (TKSDRPELTG…PEMTEILKKK (129 aa)) are domain II. Residue K216 is modified to N6-succinyllysine. Position 223 (R223) interacts with FAD. K226 and K232 each carry N6-acetyllysine; alternate. Residues K226 and K232 each carry the N6-succinyllysine; alternate modification. Residues S248, 263–266 (VGQT), 281–286 (SGAIQH), and N300 contribute to the FAD site. Position 301 is an N6-succinyllysine (K301). FAD is bound at residue 318–319 (DL).

The protein belongs to the ETF alpha-subunit/FixB family. In terms of assembly, heterodimer composed of ETFA and ETFB. Identified in a complex that contains ETFA, ETFB and ETFRF1. Interaction with ETFRF1 promotes dissociation of the bound FAD and loss of electron transfer activity. Interacts with TASOR. FAD serves as cofactor.

It localises to the mitochondrion matrix. In terms of biological role, heterodimeric electron transfer flavoprotein that accepts electrons from several mitochondrial dehydrogenases, including acyl-CoA dehydrogenases, glutaryl-CoA and sarcosine dehydrogenase. It transfers the electrons to the main mitochondrial respiratory chain via ETF-ubiquinone oxidoreductase (ETF dehydrogenase). Required for normal mitochondrial fatty acid oxidation and normal amino acid metabolism. The sequence is that of Electron transfer flavoprotein subunit alpha, mitochondrial (ETFA) from Pongo abelii (Sumatran orangutan).